We begin with the raw amino-acid sequence, 287 residues long: MKLSLLAAAAIAPMVSAHYFFDTLVIDGQETTPNQYVRSNTRPEKYNPTKWVNTRDDMTPDMPDFRCNKGSFTFAGQTDTAEVKAGSKLAMKLGVGATMQHPGPGLVYMSKAPGAANQYEGDGDWFKIHEEGICDTSKDIKTDAWCTWDKDRIEFTIPADLPDGEYLIRSEHIGVHGAHDGQAEFYYECAQVKVTGGGNGNPQDTIKFPGGYQKDDPSFNFSVWGGMKDYPMPGPAVYTGGSGSSTGSYNESNAEDSNEYPYQKESGTCQSNFYRREHARDFSHRRA.

An N-terminal signal peptide occupies residues 1 to 17 (MKLSLLAAAAIAPMVSA). His-18 lines the Cu(2+) pocket. A disulfide bridge connects residues Cys-67 and Cys-189. Position 176 (His-176) interacts with O2. Tyr-186 serves as a coordination point for Cu(2+). 2 N-linked (GlcNAc...) asparagine glycosylation sites follow: Asn-220 and Asn-250. A disordered region spans residues 239 to 287 (TGGSGSSTGSYNESNAEDSNEYPYQKESGTCQSNFYRREHARDFSHRRA). Basic and acidic residues predominate over residues 274–287 (YRREHARDFSHRRA).

Belongs to the polysaccharide monooxygenase AA9 family. Requires Cu(2+) as cofactor.

The protein resides in the secreted. The catalysed reaction is [(1-&gt;4)-beta-D-glucosyl]n+m + reduced acceptor + O2 = 4-dehydro-beta-D-glucosyl-[(1-&gt;4)-beta-D-glucosyl]n-1 + [(1-&gt;4)-beta-D-glucosyl]m + acceptor + H2O.. Lytic polysaccharide monooxygenase (LPMO) that depolymerizes crystalline and amorphous polysaccharides via the oxidation of scissile alpha- or beta-(1-4)-glycosidic bonds, yielding C1 oxidation products. Catalysis by LPMOs requires the reduction of the active-site copper from Cu(II) to Cu(I) by a reducing agent and H(2)O(2) or O(2) as a cosubstrate. Active on celluloseas as well as on the hemicellulose xyloglucan. Shows synergy with other hydrolases in degrading sorghum stover. The protein is AA9 family lytic polysaccharide monooxygenase D of Emericella nidulans (strain FGSC A4 / ATCC 38163 / CBS 112.46 / NRRL 194 / M139) (Aspergillus nidulans).